Here is a 62-residue protein sequence, read N- to C-terminus: Small ribosomal subunit protein eS27 (62 aa).

Zn(2+)-binding residues include cysteine 17, cysteine 20, cysteine 36, and cysteine 39. A C4-type zinc finger spans residues 17-39 (CNDCENEQIIFGSASRKITCVVC).

Belongs to the eukaryotic ribosomal protein eS27 family. As to quaternary structure, part of the 30S ribosomal subunit. Zn(2+) serves as cofactor.

This chain is Small ribosomal subunit protein eS27, found in Methanosarcina mazei (strain ATCC BAA-159 / DSM 3647 / Goe1 / Go1 / JCM 11833 / OCM 88) (Methanosarcina frisia).